Reading from the N-terminus, the 485-residue chain is ATP synthase subunit beta (485 aa).

The segment covering 1–11 has biased composition (basic and acidic residues); the sequence is MPATETADKNT. The interval 1–20 is disordered; sequence MPATETADKNTKSANSDTSG. 170 to 177 is a binding site for ATP; the sequence is GGAGVGKT.

The protein belongs to the ATPase alpha/beta chains family. In terms of assembly, F-type ATPases have 2 components, CF(1) - the catalytic core - and CF(0) - the membrane proton channel. CF(1) has five subunits: alpha(3), beta(3), gamma(1), delta(1), epsilon(1). CF(0) has three main subunits: a(1), b(2) and c(9-12). The alpha and beta chains form an alternating ring which encloses part of the gamma chain. CF(1) is attached to CF(0) by a central stalk formed by the gamma and epsilon chains, while a peripheral stalk is formed by the delta and b chains.

It is found in the cell membrane. The catalysed reaction is ATP + H2O + 4 H(+)(in) = ADP + phosphate + 5 H(+)(out). Functionally, produces ATP from ADP in the presence of a proton gradient across the membrane. The catalytic sites are hosted primarily by the beta subunits. The chain is ATP synthase subunit beta from Mycobacterium avium (strain 104).